The following is a 791-amino-acid chain: Pleckstrin homology domain-containing family H member 3 (791 aa).

The signal sequence occupies residues M1–T18. Residues L29–T41 are compositionally biased toward acidic residues. The segment at L29 to T71 is disordered. Phosphoserine is present on S30. Over residues V59–T71 the composition is skewed to polar residues. One can recognise a PH domain in the interval D95–A199. A MyTH4 domain is found at H237–S399. Residues L404–S755 form the FERM domain. Positions P549–L559 are enriched in low complexity. Disordered regions lie at residues P549–S580 and L593–S623. The segment covering A594–G605 has biased composition (basic residues). Omega-N-methylarginine is present on R636. Positions P748–D791 are disordered. Over residues C754 to D791 the composition is skewed to polar residues.

The sequence is that of Pleckstrin homology domain-containing family H member 3 (Plekhh3) from Rattus norvegicus (Rat).